Reading from the N-terminus, the 100-residue chain is uncharacterized protein (100 aa).

It localises to the mitochondrion. This is an uncharacterized protein from Arabidopsis thaliana (Mouse-ear cress).